Reading from the N-terminus, the 160-residue chain is Cytochrome b6-f complex subunit 4 (160 aa).

3 helical membrane-spanning segments follow: residues 36–56 (LLYI…GLAV), 95–115 (LLGV…PFLE), and 131–151 (TVFL…TLPI).

Belongs to the cytochrome b family. PetD subfamily. The 4 large subunits of the cytochrome b6-f complex are cytochrome b6, subunit IV (17 kDa polypeptide, petD), cytochrome f and the Rieske protein, while the 4 small subunits are petG, petL, petM and petN. The complex functions as a dimer.

The protein resides in the plastid. It is found in the chloroplast thylakoid membrane. In terms of biological role, component of the cytochrome b6-f complex, which mediates electron transfer between photosystem II (PSII) and photosystem I (PSI), cyclic electron flow around PSI, and state transitions. This is Cytochrome b6-f complex subunit 4 from Gossypium barbadense (Sea Island cotton).